The chain runs to 147 residues: Sentan (147 aa).

Residues 1–32 (MGGCMHSTQDKSLHLEGDPNPSAAPTSTCAPR) form a disordered region. Positions 8-17 (TQDKSLHLEG) are enriched in basic and acidic residues.

The protein belongs to the S-100 family.

It localises to the cell projection. The protein localises to the cilium. In terms of biological role, may be a component of the linker structure that bridges the ciliary membrane and peripheral singlet microtubules. The chain is Sentan (SNTN) from Homo sapiens (Human).